The following is a 545-amino-acid chain: Ribulokinase (545 aa).

This sequence belongs to the ribulokinase family.

The catalysed reaction is D-ribulose + ATP = D-ribulose 5-phosphate + ADP + H(+). It carries out the reaction L-ribulose + ATP = L-ribulose 5-phosphate + ADP + H(+). It participates in carbohydrate degradation; L-arabinose degradation via L-ribulose; D-xylulose 5-phosphate from L-arabinose (bacterial route): step 2/3. This chain is Ribulokinase, found in Staphylococcus aureus (strain bovine RF122 / ET3-1).